Reading from the N-terminus, the 229-residue chain is Heptaprenylglyceryl phosphate synthase (229 aa).

K12 serves as a coordination point for sn-glycerol 1-phosphate. 2 residues coordinate Mg(2+): D14 and S40. Sn-glycerol 1-phosphate is bound by residues 159 to 164 (YLEYSG), G189, and 209 to 210 (GN).

The protein belongs to the GGGP/HepGP synthase family. Group I subfamily. As to quaternary structure, homodimer. Mg(2+) serves as cofactor.

It carries out the reaction sn-glycerol 1-phosphate + all-trans-heptaprenyl diphosphate = 3-heptaprenyl-sn-glycero-1-phosphate + diphosphate. Its pathway is membrane lipid metabolism; glycerophospholipid metabolism. Its function is as follows. Prenyltransferase that catalyzes in vivo the transfer of the heptaprenyl moiety of heptaprenyl pyrophosphate (HepPP; 35 carbon atoms) to the C3 hydroxyl of sn-glycerol-1-phosphate (G1P), producing heptaprenylglyceryl phosphate (HepGP). This reaction is an ether-bond-formation step in the biosynthesis of archaea-type G1P-based membrane lipids found in Bacillales. The sequence is that of Heptaprenylglyceryl phosphate synthase from Bacillus cereus (strain ZK / E33L).